Consider the following 230-residue polypeptide: MTMPFYVPAEQQMKDKADYARKGIARGRSVVVLQYDDGILFVADNPSRALHKISEIYDRIAFAAVGKYNEFETLRLAGVRYADINGYQYDRRDVTARGLANAYAQTLGTIFTETAKPYEVELVVAEAGLDADSDQIYRLTFDGSVRDEHGYVAMGGQVDAVEQALKERFTEGMSLSAALRAGVQSLEAQESGRRLEAKALEVAVLDRNREHRLFRRLPAPRIEELLAEGA.

Belongs to the peptidase T1A family. The 20S proteasome core is composed of 14 alpha and 14 beta subunits that assemble into four stacked heptameric rings, resulting in a barrel-shaped structure. The two inner rings, each composed of seven catalytic beta subunits, are sandwiched by two outer rings, each composed of seven alpha subunits. The catalytic chamber with the active sites is on the inside of the barrel. Has a gated structure, the ends of the cylinder being occluded by the N-termini of the alpha-subunits. Is capped by the proteasome-associated ATPase, ARC.

The protein resides in the cytoplasm. It participates in protein degradation; proteasomal Pup-dependent pathway. Its activity is regulated as follows. The formation of the proteasomal ATPase ARC-20S proteasome complex, likely via the docking of the C-termini of ARC into the intersubunit pockets in the alpha-rings, may trigger opening of the gate for substrate entry. Interconversion between the open-gate and close-gate conformations leads to a dynamic regulation of the 20S proteasome proteolysis activity. In terms of biological role, component of the proteasome core, a large protease complex with broad specificity involved in protein degradation. The polypeptide is Proteasome subunit alpha (Thermomonospora curvata (strain ATCC 19995 / DSM 43183 / JCM 3096 / KCTC 9072 / NBRC 15933 / NCIMB 10081 / Henssen B9)).